A 342-amino-acid chain; its full sequence is 4-hydroxy-2-oxovalerate aldolase 2 (342 aa).

One can recognise a Pyruvate carboxyltransferase domain in the interval 8 to 260 (ITVHDMTLRD…ETGVDVFKIQ (253 aa)). 16–17 (RD) contributes to the substrate binding site. A Mn(2+)-binding site is contributed by aspartate 17. Histidine 20 functions as the Proton acceptor in the catalytic mechanism. Residues serine 170 and histidine 199 each contribute to the substrate site. Residues histidine 199 and histidine 201 each coordinate Mn(2+). Position 290 (tyrosine 290) interacts with substrate.

This sequence belongs to the 4-hydroxy-2-oxovalerate aldolase family.

It catalyses the reaction (S)-4-hydroxy-2-oxopentanoate = acetaldehyde + pyruvate. The protein is 4-hydroxy-2-oxovalerate aldolase 2 (mhpE) of Azoarcus sp. (strain BH72).